Reading from the N-terminus, the 484-residue chain is Protein nucleotidyltransferase YdiU (484 aa).

G81, G83, R84, K103, D115, G116, R166, and R173 together coordinate ATP. Catalysis depends on D244, which acts as the Proton acceptor. The Mg(2+) site is built by N245 and D254. D254 lines the ATP pocket.

The protein belongs to the SELO family. Mg(2+) is required as a cofactor. The cofactor is Mn(2+).

It catalyses the reaction L-seryl-[protein] + ATP = 3-O-(5'-adenylyl)-L-seryl-[protein] + diphosphate. It carries out the reaction L-threonyl-[protein] + ATP = 3-O-(5'-adenylyl)-L-threonyl-[protein] + diphosphate. The catalysed reaction is L-tyrosyl-[protein] + ATP = O-(5'-adenylyl)-L-tyrosyl-[protein] + diphosphate. The enzyme catalyses L-histidyl-[protein] + UTP = N(tele)-(5'-uridylyl)-L-histidyl-[protein] + diphosphate. It catalyses the reaction L-seryl-[protein] + UTP = O-(5'-uridylyl)-L-seryl-[protein] + diphosphate. It carries out the reaction L-tyrosyl-[protein] + UTP = O-(5'-uridylyl)-L-tyrosyl-[protein] + diphosphate. Its function is as follows. Nucleotidyltransferase involved in the post-translational modification of proteins. It can catalyze the addition of adenosine monophosphate (AMP) or uridine monophosphate (UMP) to a protein, resulting in modifications known as AMPylation and UMPylation. This chain is Protein nucleotidyltransferase YdiU, found in Shewanella baltica (strain OS155 / ATCC BAA-1091).